The primary structure comprises 571 residues: Membrane protein insertase YidC (571 aa).

A helical transmembrane segment spans residues 4 to 24 (TRVFLIFAWLMVAVLLWMEWS). Residues 29 to 78 (APTPAPTTTSAPAAAQSVPGANPGAIPSAQVPGAPGQAAAQAQASATPAS) are disordered. Low complexity-rich tracts occupy residues 34–43 (PTTTSAPAAA) and 55–78 (PSAQ…TPAS). Transmembrane regions (helical) follow at residues 369-389 (LVGN…LVLY), 440-460 (GGCL…WVLV), 483-503 (YFIL…LTPA), and 518-538 (PLVF…YWVV).

It belongs to the OXA1/ALB3/YidC family. Type 1 subfamily. As to quaternary structure, interacts with the Sec translocase complex via SecD. Specifically interacts with transmembrane segments of nascent integral membrane proteins during membrane integration.

The protein resides in the cell inner membrane. Its function is as follows. Required for the insertion and/or proper folding and/or complex formation of integral membrane proteins into the membrane. Involved in integration of membrane proteins that insert both dependently and independently of the Sec translocase complex, as well as at least some lipoproteins. Aids folding of multispanning membrane proteins. This Stenotrophomonas maltophilia (strain K279a) protein is Membrane protein insertase YidC.